The chain runs to 218 residues: Large ribosomal subunit protein uL3 (218 aa).

The protein belongs to the universal ribosomal protein uL3 family. Part of the 50S ribosomal subunit. Forms a cluster with proteins L14 and L19.

Its function is as follows. One of the primary rRNA binding proteins, it binds directly near the 3'-end of the 23S rRNA, where it nucleates assembly of the 50S subunit. This is Large ribosomal subunit protein uL3 from Corynebacterium jeikeium (strain K411).